The following is a 209-amino-acid chain: dITP/XTP pyrophosphatase (209 aa).

Residue 7–12 coordinates substrate; that stretch reads TGNKGK. Asp-73 acts as the Proton acceptor in catalysis. Asp-73 serves as a coordination point for Mg(2+). Substrate is bound by residues Ser-74, 155–158, Lys-178, and 183–184; these read FGYD and HR.

This sequence belongs to the HAM1 NTPase family. In terms of assembly, homodimer. Requires Mg(2+) as cofactor.

The catalysed reaction is XTP + H2O = XMP + diphosphate + H(+). The enzyme catalyses dITP + H2O = dIMP + diphosphate + H(+). It carries out the reaction ITP + H2O = IMP + diphosphate + H(+). Functionally, pyrophosphatase that catalyzes the hydrolysis of nucleoside triphosphates to their monophosphate derivatives, with a high preference for the non-canonical purine nucleotides XTP (xanthosine triphosphate), dITP (deoxyinosine triphosphate) and ITP. Seems to function as a house-cleaning enzyme that removes non-canonical purine nucleotides from the nucleotide pool, thus preventing their incorporation into DNA/RNA and avoiding chromosomal lesions. In Sulfurovum sp. (strain NBC37-1), this protein is dITP/XTP pyrophosphatase.